We begin with the raw amino-acid sequence, 328 residues long: Coiled-coil domain-containing protein 54 (328 aa).

Residues 93–148 (KIQEKTDFFQKQMQVLETKMNVNENKQCATAEDIFSVKEDVDALKKKVTELGNQNS) adopt a coiled-coil conformation. Thr182 is subject to Phosphothreonine.

The sequence is that of Coiled-coil domain-containing protein 54 (CCDC54) from Bos taurus (Bovine).